We begin with the raw amino-acid sequence, 61 residues long: Temporin-SN3 (61 aa).

Positions 1–22 (MFTLKKTLLLLFFLGTINLSLC) are cleaved as a signal peptide. A propeptide spans 23–44 (EEERNAEEERRDGDDEMDVEVK) (removed in mature form). Lysine 61 bears the Lysine amide mark.

This sequence belongs to the frog skin active peptide (FSAP) family. Temporin subfamily. In terms of tissue distribution, expressed by the skin glands.

The protein resides in the secreted. Antimicrobial peptide. Active against some Gram-positive and Gram-negative bacterial strains. Active against fungus C.glabrata 090902 but not against C.albicans ATCC 12231. Shows weak hemolytic activity against human erythrocytes. This chain is Temporin-SN3, found in Sylvirana spinulosa (Fine-spined frog).